The sequence spans 74 residues: Putative sulfur carrier protein NMA0882 (74 aa).

Cys13 serves as the catalytic Cysteine persulfide intermediate.

The protein belongs to the sulfur carrier protein TusA family.

The protein is Putative sulfur carrier protein NMA0882 of Neisseria meningitidis serogroup A / serotype 4A (strain DSM 15465 / Z2491).